A 275-amino-acid polypeptide reads, in one-letter code: Ribosomal RNA small subunit methyltransferase A (275 aa).

Residues asparagine 15, leucine 17, glycine 42, glutamate 63, aspartate 88, and asparagine 111 each coordinate S-adenosyl-L-methionine.

It belongs to the class I-like SAM-binding methyltransferase superfamily. rRNA adenine N(6)-methyltransferase family. RsmA subfamily.

The protein localises to the cytoplasm. The enzyme catalyses adenosine(1518)/adenosine(1519) in 16S rRNA + 4 S-adenosyl-L-methionine = N(6)-dimethyladenosine(1518)/N(6)-dimethyladenosine(1519) in 16S rRNA + 4 S-adenosyl-L-homocysteine + 4 H(+). Specifically dimethylates two adjacent adenosines (A1518 and A1519) in the loop of a conserved hairpin near the 3'-end of 16S rRNA in the 30S particle. May play a critical role in biogenesis of 30S subunits. In Geobacter metallireducens (strain ATCC 53774 / DSM 7210 / GS-15), this protein is Ribosomal RNA small subunit methyltransferase A.